Here is a 249-residue protein sequence, read N- to C-terminus: NAD kinase (249 aa).

The Proton acceptor role is filled by D45. NAD(+) is bound by residues 45-46, R50, 110-111, D138, and 149-154; these read DG, NE, and SGWGMS.

It belongs to the NAD kinase family. Requires a divalent metal cation as cofactor.

The protein localises to the cytoplasm. The enzyme catalyses NAD(+) + ATP = ADP + NADP(+) + H(+). Functionally, involved in the regulation of the intracellular balance of NAD and NADP, and is a key enzyme in the biosynthesis of NADP. Catalyzes specifically the phosphorylation on 2'-hydroxyl of the adenosine moiety of NAD to yield NADP. The chain is NAD kinase from Saccharolobus solfataricus (strain ATCC 35092 / DSM 1617 / JCM 11322 / P2) (Sulfolobus solfataricus).